Here is a 182-residue protein sequence, read N- to C-terminus: Large ribosomal subunit protein uL22 (182 aa).

The tract at residues 159 to 182 (AAAKPKATAKKATGEKSKAKTKAN) is disordered.

It belongs to the universal ribosomal protein uL22 family. Part of the 50S ribosomal subunit.

In terms of biological role, this protein binds specifically to 23S rRNA; its binding is stimulated by other ribosomal proteins, e.g. L4, L17, and L20. It is important during the early stages of 50S assembly. It makes multiple contacts with different domains of the 23S rRNA in the assembled 50S subunit and ribosome. Functionally, the globular domain of the protein is located near the polypeptide exit tunnel on the outside of the subunit, while an extended beta-hairpin is found that lines the wall of the exit tunnel in the center of the 70S ribosome. The protein is Large ribosomal subunit protein uL22 of Cytophaga hutchinsonii (strain ATCC 33406 / DSM 1761 / CIP 103989 / NBRC 15051 / NCIMB 9469 / D465).